The chain runs to 510 residues: NAD(P)H-quinone oxidoreductase subunit 2 B, chloroplastic (510 aa).

Transmembrane regions (helical) follow at residues Leu-24 to Leu-44, Ile-57 to Phe-77, Ile-99 to Ile-119, Met-124 to Cys-144, Ile-150 to Thr-170, Tyr-183 to Gly-203, Pro-227 to Ala-247, Trp-295 to Ile-315, Met-323 to Asp-343, Gly-347 to Ala-367, Ala-395 to Phe-415, Leu-418 to Leu-438, and Met-484 to Ile-504.

This sequence belongs to the complex I subunit 2 family. As to quaternary structure, NDH is composed of at least 16 different subunits, 5 of which are encoded in the nucleus.

The protein resides in the plastid. It is found in the chloroplast thylakoid membrane. The enzyme catalyses a plastoquinone + NADH + (n+1) H(+)(in) = a plastoquinol + NAD(+) + n H(+)(out). The catalysed reaction is a plastoquinone + NADPH + (n+1) H(+)(in) = a plastoquinol + NADP(+) + n H(+)(out). Its function is as follows. NDH shuttles electrons from NAD(P)H:plastoquinone, via FMN and iron-sulfur (Fe-S) centers, to quinones in the photosynthetic chain and possibly in a chloroplast respiratory chain. The immediate electron acceptor for the enzyme in this species is believed to be plastoquinone. Couples the redox reaction to proton translocation, and thus conserves the redox energy in a proton gradient. The protein is NAD(P)H-quinone oxidoreductase subunit 2 B, chloroplastic of Liriodendron tulipifera (Tuliptree).